The sequence spans 89 residues: Cornifin (89 aa).

The interval 1–29 (MSSQQQKQPCTPPPQLQQQQVKQPCQPPP) is disordered. Ser2 is modified (N-acetylserine). 8 consecutive repeat copies span residues 3-14 (SQQQKQPCTPPP), 18-29 (QQQVKQPCQPPP), 31-38 (EPCIPKTK), 39-46 (EPCLPKVP), 47-54 (EPCHPKVP), 55-62 (EPCQPKVP), 63-70 (EPCHPKVP), and 71-78 (EPCPSTVT). The 2 X 12 AA approximate repeats stretch occupies residues 3-29 (SQQQKQPCTPPPQLQQQQVKQPCQPPP). Positions 31-78 (EPCIPKTKEPCLPKVPEPCHPKVPEPCQPKVPEPCHPKVPEPCPSTVT) are 6 X 8 AA approximate tandem repeats. A disordered region spans residues 68–89 (KVPEPCPSTVTPAPAQQKTKQK). Residues 75–89 (STVTPAPAQQKTKQK) are compositionally biased toward polar residues.

Belongs to the cornifin (SPRR) family.

It localises to the cytoplasm. Its function is as follows. Cross-linked envelope protein of keratinocytes. It is a keratinocyte protein that first appears in the cell cytosol, but ultimately becomes cross-linked to membrane proteins by transglutaminase. All that results in the formation of an insoluble envelope beneath the plasma membrane. This chain is Cornifin (SPRR1), found in Macaca mulatta (Rhesus macaque).